The chain runs to 453 residues: Probable acetylornithine aminotransferase, mitochondrial (453 aa).

The residue at position 302 (lysine 302) is an N6-(pyridoxal phosphate)lysine.

This sequence belongs to the class-III pyridoxal-phosphate-dependent aminotransferase family. Pyridoxal 5'-phosphate serves as cofactor.

The protein resides in the mitochondrion matrix. It catalyses the reaction N(2)-acetyl-L-ornithine + 2-oxoglutarate = N-acetyl-L-glutamate 5-semialdehyde + L-glutamate. It functions in the pathway amino-acid biosynthesis; L-arginine biosynthesis; N(2)-acetyl-L-ornithine from L-glutamate: step 4/4. The protein is Probable acetylornithine aminotransferase, mitochondrial (argD) of Dictyostelium discoideum (Social amoeba).